The primary structure comprises 229 residues: Large ribosomal subunit protein uL1 (229 aa).

The protein belongs to the universal ribosomal protein uL1 family. As to quaternary structure, part of the 50S ribosomal subunit.

Binds directly to 23S rRNA. The L1 stalk is quite mobile in the ribosome, and is involved in E site tRNA release. Functionally, protein L1 is also a translational repressor protein, it controls the translation of the L11 operon by binding to its mRNA. In Magnetococcus marinus (strain ATCC BAA-1437 / JCM 17883 / MC-1), this protein is Large ribosomal subunit protein uL1.